A 762-amino-acid polypeptide reads, in one-letter code: MAIQTSNLGYPRIGLQREWKKTLEAFWSNKINEEQFLTTMKEIRLQHVKVQQEKGIELIPIGDFTYYDHVLDTAYMLGFIPSRFSEFTSYLDVYFAMARGSKDHVASEMTKWFNTNYHYIVPEYEEGLQISLKDNRPLRLYEEAKQELGVDGKPVILGPYTFLKLAKGYTQEQFATILKQLVAPYVQLLSELHAAGAQIIQVDEPIFASLTKEEVQQAKEIYEAIRKEVPNATLLLQTYFDSVEENYEEIITFPVSSIGLDFVHGKEGNLNAVSKYGFPADKTLAVGCIDGRNIWRADLDEVLTLFTTLQKQVQTKDLIVQPSCSLLHTPIDKTEETHLSTELFDALAFANQKLEELVLIHSALTQGTESISNELETYRNVHHTIRSSAARNREDVKAARTALKEEDFSRPLPFEKRYELQQVALKLPLLPTTTIGSFPQTTEVRQTRKEWRNGIISNEQYEQFIEKETEKWIRYQEEIGLDVLVHGEFERTDMVEYFGERLAGFSFTKNGWVQSYGSRCVKPPVIYGDVAFINGMTIKETVYAQSLTEKVVKGMLTGPVTILNWSFVRNDIPRKEVSYQIALALRHEIELLESSGIRVIQVDEPALREGMPLKEKDWDAYITWAVQSFLLATSSVANETQIHTHMCYSNFEDIVDAIRALDADVISIETSRSHGEFIDTLKHTTYEKGIGLGVYDIHSPRVPSKDEMYKIVEQSLQVCDPKYFWINPDCGLKTRRTEEVIPALEHMVQAAKDARSLLKTNA.

Residues Arg-17–Lys-20 and Lys-111 each bind 5-methyltetrahydropteroyltri-L-glutamate. L-homocysteine contacts are provided by residues Ile-435–Ser-437 and Glu-488. Residues Ile-435–Ser-437 and Glu-488 contribute to the L-methionine site. 5-methyltetrahydropteroyltri-L-glutamate is bound by residues Arg-519–Cys-520 and Trp-565. Asp-603 contacts L-homocysteine. Residue Asp-603 coordinates L-methionine. Glu-609 contributes to the 5-methyltetrahydropteroyltri-L-glutamate binding site. 3 residues coordinate Zn(2+): His-645, Cys-647, and Glu-669. The active-site Proton donor is His-698. Cys-730 is a Zn(2+) binding site.

The protein belongs to the vitamin-B12 independent methionine synthase family. Requires Zn(2+) as cofactor.

It carries out the reaction 5-methyltetrahydropteroyltri-L-glutamate + L-homocysteine = tetrahydropteroyltri-L-glutamate + L-methionine. It functions in the pathway amino-acid biosynthesis; L-methionine biosynthesis via de novo pathway; L-methionine from L-homocysteine (MetE route): step 1/1. In terms of biological role, catalyzes the transfer of a methyl group from 5-methyltetrahydrofolate to homocysteine resulting in methionine formation. This is 5-methyltetrahydropteroyltriglutamate--homocysteine methyltransferase from Bacillus anthracis (strain CDC 684 / NRRL 3495).